A 498-amino-acid polypeptide reads, in one-letter code: RuvB-like helicase 2 (498 aa).

ATP is bound at residue 79 to 86; sequence GPPSTGKT. The tract at residues 458-498 is disordered; the sequence is VTIGQESTDGSTQPQAKQQEVAQPEATQPQSQPEDDKMETD. Polar residues predominate over residues 461–489; the sequence is GQESTDGSTQPQAKQQEVAQPEATQPQSQ.

The protein belongs to the RuvB family. May form heterododecamers with RVB1. Component of the SWR1 chromatin remodeling complex, the INO80 chromatin remodeling complex, and of the R2TP complex.

The protein localises to the nucleus. The enzyme catalyses ATP + H2O = ADP + phosphate + H(+). Functionally, DNA helicase which participates in several chromatin remodeling complexes, including the SWR1 and the INO80 complexes. The SWR1 complex mediates the ATP-dependent exchange of histone H2A for the H2A variant HZT1 leading to transcriptional regulation of selected genes by chromatin remodeling. The INO80 complex remodels chromatin by shifting nucleosomes and is involved in DNA repair. Also involved in pre-rRNA processing. The sequence is that of RuvB-like helicase 2 (RVB2) from Candida albicans (strain SC5314 / ATCC MYA-2876) (Yeast).